We begin with the raw amino-acid sequence, 592 residues long: Aspartate--tRNA(Asp/Asn) ligase (592 aa).

Glutamate 182 contacts L-aspartate. Positions 206 to 209 (QIFK) are aspartate. Arginine 228 contacts L-aspartate. Residues 228-230 (RDE) and glutamine 237 each bind ATP. Histidine 455 provides a ligand contact to L-aspartate. Glutamate 489 is an ATP binding site. Residue arginine 496 participates in L-aspartate binding. 541–544 (GLDR) contacts ATP.

The protein belongs to the class-II aminoacyl-tRNA synthetase family. Type 1 subfamily. Homodimer.

It localises to the cytoplasm. It catalyses the reaction tRNA(Asx) + L-aspartate + ATP = L-aspartyl-tRNA(Asx) + AMP + diphosphate. Functionally, aspartyl-tRNA synthetase with relaxed tRNA specificity since it is able to aspartylate not only its cognate tRNA(Asp) but also tRNA(Asn). Reaction proceeds in two steps: L-aspartate is first activated by ATP to form Asp-AMP and then transferred to the acceptor end of tRNA(Asp/Asn). This is Aspartate--tRNA(Asp/Asn) ligase from Caldanaerobacter subterraneus subsp. tengcongensis (strain DSM 15242 / JCM 11007 / NBRC 100824 / MB4) (Thermoanaerobacter tengcongensis).